We begin with the raw amino-acid sequence, 299 residues long: Protease HtpX homolog (299 aa).

Transmembrane regions (helical) follow at residues 14 to 34 (WLLLLVFFLLLGLVGYGVGNL) and 39 to 59 (GFGGLILALVIGFIYVVTMIF). Residue H143 participates in Zn(2+) binding. E144 is an active-site residue. H147 lines the Zn(2+) pocket. A run of 2 helical transmembrane segments spans residues 153 to 173 (IRISTIAVALASAITMLAGMA) and 198 to 218 (IVFLILSLIAIILAPLAATLV). E227 contacts Zn(2+).

The protein belongs to the peptidase M48B family. Zn(2+) serves as cofactor.

The protein localises to the cell membrane. The protein is Protease HtpX homolog of Streptococcus thermophilus (strain ATCC BAA-250 / LMG 18311).